Here is a 249-residue protein sequence, read N- to C-terminus: UPF0246 protein Lreu_0493 (249 aa).

It belongs to the UPF0246 family.

The chain is UPF0246 protein Lreu_0493 from Limosilactobacillus reuteri (strain DSM 20016) (Lactobacillus reuteri).